Here is a 177-residue protein sequence, read N- to C-terminus: Ferritin, heavy subunit (177 aa).

Residues Gln7–Gly156 enclose the Ferritin-like diiron domain. Fe cation is bound by residues Glu24, Glu59, His62, Glu104, and Gln138.

Belongs to the ferritin family. As to quaternary structure, oligomer of 24 subunits. There are at least two types of subunits. The functional molecule forms a roughly spherical shell with a diameter of 12 nm and contains a central cavity into which the insoluble mineral iron core is deposited. As to expression, liver, gonads, head kidney, heart and spleen.

It catalyses the reaction 4 Fe(2+) + O2 + 4 H(+) = 4 Fe(3+) + 2 H2O. Stores iron in a soluble, non-toxic, readily available form. Important for iron homeostasis. Has ferroxidase activity. Iron is taken up in the ferrous form and deposited as ferric hydroxides after oxidation. In Salmo salar (Atlantic salmon), this protein is Ferritin, heavy subunit.